Consider the following 449-residue polypeptide: Clusterin (449 aa).

A signal peptide spans 1–22 (MMKTLLLFVGLLLTWESGQVLG). Positions 78-81 (KKKK) match the Nuclear localization signal motif. An N-linked (GlcNAc...) (complex) asparagine glycan is attached at asparagine 86. 5 disulfides stabilise this stretch: cysteine 102–cysteine 313, cysteine 113–cysteine 305, cysteine 116–cysteine 302, cysteine 121–cysteine 295, and cysteine 129–cysteine 285. An N-linked (GlcNAc...) asparagine glycan is attached at asparagine 103. Serine 133 is subject to Phosphoserine. N-linked (GlcNAc...) asparagine glycans are attached at residues asparagine 145, asparagine 291, and asparagine 354. Asparagine 374 carries an N-linked (GlcNAc...) (complex) asparagine glycan. Serine 396 bears the Phosphoserine mark. The Nuclear localization signal signature appears at 443-447 (RKKHR).

The protein belongs to the clusterin family. Antiparallel disulfide-linked heterodimer of an alpha chain and a beta chain. Self-associates and forms higher oligomers. Interacts with a broad range of misfolded proteins, including APP, APOC2 and LYZ. Slightly acidic pH promotes interaction with misfolded proteins. Forms high-molecular weight oligomers upon interaction with misfolded proteins. Interacts with APOA1, LRP2, CLUAP1 and PON1. Interacts with the complement membrane attack complex. Interacts (via alpha chain) with XRCC6. Interacts with SYVN1, COMMD1, BTRC, CUL1 and with ubiquitin and SCF (SKP1-CUL1-F-box protein) E3 ubiquitin-protein ligase complexes. Interacts (via alpha chain) with BAX in stressed cells, where BAX undergoes a conformation change leading to association with the mitochondrial membrane. Does not interact with BAX in unstressed cells. Found in a complex with LTF, CLU, EPPIN and SEMG1. Interacts (immaturely glycosylated pre-secreted form) with HSPA5; this interaction promotes CLU stability and facilitates stress-induced CLU retrotranslocation from the secretory pathway to the mitochondria, thereby reducing stress-induced apoptosis by stabilizing mitochondrial membrane integrity. Interacts (isoform 4) with BCL2L1; this interaction releases and activates BAX and promotes cell death. Interacts with TGFBR2 and ACVR1. Interacts (secreted form) with STMN3; this interaction may act as an important modulator during neuronal differentiation. Interacts with VLDLR and LRP8. Post-translationally, proteolytically cleaved on its way through the secretory system, probably within the Golgi lumen. Proteolytic cleavage is not necessary for its chaperone activity. All non-secreted forms are not proteolytically cleaved. Chaperone activity of uncleaved forms is dependent on a non-reducing environment. Polyubiquitinated, leading to proteasomal degradation. Under cellular stress, the intracellular level of cleaved form is reduced due to proteasomal degradation. In terms of processing, extensively glycosylated with sulfated N-linked carbohydrates. About 30% of the protein mass is comprised of complex N-linked carbohydrate. Endoplasmic reticulum (ER) stress induces changes in glycosylation status and increases level of hypoglycosylated forms. Core carbohydrates are essential for chaperone activity. Non-secreted forms are hypoglycosylated or unglycosylated. Detected in blood plasma, cerebrospinal fluid, milk, seminal plasma and colon mucosa. Detected in the germinal center of colon lymphoid nodules and in colon parasympathetic ganglia of the Auerbach plexus (at protein level). Ubiquitous. Detected in brain, testis, ovary, liver and pancreas, and at lower levels in kidney, heart, spleen and lung.

The protein localises to the secreted. Its subcellular location is the cytoplasm. The protein resides in the nucleus. It localises to the mitochondrion membrane. It is found in the cytosol. The protein localises to the microsome. Its subcellular location is the endoplasmic reticulum. The protein resides in the mitochondrion. It localises to the perinuclear region. It is found in the cytoplasmic vesicle. The protein localises to the secretory vesicle. Its subcellular location is the chromaffin granule. Functionally, functions as extracellular chaperone that prevents aggregation of non native proteins. Prevents stress-induced aggregation of blood plasma proteins. Inhibits formation of amyloid fibrils by APP, APOC2, B2M, CALCA, CSN3, SNCA and aggregation-prone LYZ variants (in vitro). Does not require ATP. Maintains partially unfolded proteins in a state appropriate for subsequent refolding by other chaperones, such as HSPA8/HSC70. Does not refold proteins by itself. Binding to cell surface receptors triggers internalization of the chaperone-client complex and subsequent lysosomal or proteasomal degradation. Protects cells against apoptosis and against cytolysis by complement: inhibits assembly of the complement membrane attack complex (MAC) by preventing polymerization of C9 pore component of the MAC complex. Intracellular forms interact with ubiquitin and SCF (SKP1-CUL1-F-box protein) E3 ubiquitin-protein ligase complexes and promote the ubiquitination and subsequent proteasomal degradation of target proteins. Promotes proteasomal degradation of COMMD1 and IKBKB. Modulates NF-kappa-B transcriptional activity. A mitochondrial form suppresses BAX-dependent release of cytochrome c into the cytoplasm and inhibit apoptosis. Plays a role in the regulation of cell proliferation. An intracellular form suppresses stress-induced apoptosis by stabilizing mitochondrial membrane integrity through interaction with HSPA5. Secreted form does not affect caspase or BAX-mediated intrinsic apoptosis and TNF-induced NF-kappa-B-activity. Secreted form act as an important modulator during neuronal differentiation through interaction with STMN3. Plays a role in the clearance of immune complexes that arise during cell injury. Does not affect caspase or BAX-mediated intrinsic apoptosis and TNF-induced NF-kappa-B-activity. In terms of biological role, does not affect caspase or BAX-mediated intrinsic apoptosis and TNF-induced NF-kappa-B-activity. Promotes cell death through interaction with BCL2L1 that releases and activates BAX. The polypeptide is Clusterin (Homo sapiens (Human)).